Here is a 346-residue protein sequence, read N- to C-terminus: 3',5'-cyclic-nucleotide phosphodiesterase (346 aa).

Belongs to the cyclic nucleotide phosphodiesterase class-II family.

The enzyme catalyses a nucleoside 3',5'-cyclic phosphate + H2O = a nucleoside 5'-phosphate + H(+). The sequence is that of 3',5'-cyclic-nucleotide phosphodiesterase (cgs2) from Schizosaccharomyces pombe (strain 972 / ATCC 24843) (Fission yeast).